Consider the following 440-residue polypeptide: ATP-dependent protease ATPase subunit HslU (440 aa).

Residues valine 18, 60 to 65 (GVGKTE), aspartate 253, glutamate 318, and arginine 390 each bind ATP.

It belongs to the ClpX chaperone family. HslU subfamily. In terms of assembly, a double ring-shaped homohexamer of HslV is capped on each side by a ring-shaped HslU homohexamer. The assembly of the HslU/HslV complex is dependent on binding of ATP.

The protein localises to the cytoplasm. Functionally, ATPase subunit of a proteasome-like degradation complex; this subunit has chaperone activity. The binding of ATP and its subsequent hydrolysis by HslU are essential for unfolding of protein substrates subsequently hydrolyzed by HslV. HslU recognizes the N-terminal part of its protein substrates and unfolds these before they are guided to HslV for hydrolysis. The chain is ATP-dependent protease ATPase subunit HslU from Methylococcus capsulatus (strain ATCC 33009 / NCIMB 11132 / Bath).